A 399-amino-acid chain; its full sequence is Elongation factor Tu (399 aa).

Positions 10–209 (KPHVNIGTIG…EVDAYIPTPE (200 aa)) constitute a tr-type G domain. A G1 region spans residues 19–26 (GHVDHGKT). Residue 19-26 (GHVDHGKT) participates in GTP binding. Thr-26 is a Mg(2+) binding site. Residues 60-64 (GITIA) form a G2 region. The tract at residues 81–84 (DCPG) is G3. GTP-binding positions include 81 to 85 (DCPGH) and 136 to 139 (NKQD). Residues 136-139 (NKQD) are G4. The tract at residues 174–176 (SAL) is G5.

Belongs to the TRAFAC class translation factor GTPase superfamily. Classic translation factor GTPase family. EF-Tu/EF-1A subfamily. As to quaternary structure, monomer.

The protein resides in the cytoplasm. The catalysed reaction is GTP + H2O = GDP + phosphate + H(+). Its function is as follows. GTP hydrolase that promotes the GTP-dependent binding of aminoacyl-tRNA to the A-site of ribosomes during protein biosynthesis. The chain is Elongation factor Tu from Helicobacter pylori (strain ATCC 700392 / 26695) (Campylobacter pylori).